The following is a 123-amino-acid chain: UPF0102 protein CLM_2733 (123 aa).

The protein belongs to the UPF0102 family.

The protein is UPF0102 protein CLM_2733 of Clostridium botulinum (strain Kyoto / Type A2).